Consider the following 766-residue polypeptide: Transcription factor GTE4 (766 aa).

Disordered regions lie at residues 87-108 (GTNSHGDKNLTEAPSENLPGDD), 234-262 (RDTTDAQQPAGLTSDSAHATAAGSMPMEE), and 388-412 (GDKLPPAESNKKSKSSSKKQGGDVG). Residues 238-250 (DAQQPAGLTSDSA) show a composition bias toward polar residues. In terms of domain architecture, Bromo spans 416 to 522 (GAGTKVFKNC…QIFEERWAVI (107 aa)). Disordered stretches follow at residues 544 to 606 (TMRS…NKRD) and 687 to 766 (ARAE…SDQT). A compositionally biased stretch (low complexity) spans 574-589 (PTTTPGRTPTSATPSG). In terms of domain architecture, NET spans 597–678 (PKANEPNKRD…NYKKGLSKKK (82 aa)). A compositionally biased stretch (low complexity) spans 736–766 (SRSSSSSSSSSSSSSSDSDSDSSSSSGSDQT).

As to expression, ubiquitously expressed.

It localises to the nucleus. Functionally, involved in the activation and maintenance of cell division in the meristems and by this controls cell numbers in differentiated organs. Its action in cell cycle regulation may be directed through the RB-E2F pathway. The protein is Transcription factor GTE4 (GTE4) of Arabidopsis thaliana (Mouse-ear cress).